Reading from the N-terminus, the 489-residue chain is Rhamnulokinase (489 aa).

Residue 13–17 coordinates ATP; it reads ASSGR. A disulfide bridge links C68 with C222. Substrate-binding positions include G83 and 236–238; that span reads HDT. Catalysis depends on D237, which acts as the Proton acceptor. T259 is a binding site for ATP. Residue N296 participates in substrate binding. Q304 serves as a coordination point for ATP. C353 and C370 are oxidised to a cystine. G402 is a binding site for ATP. C413 and C417 are oxidised to a cystine.

This sequence belongs to the rhamnulokinase family. As to quaternary structure, monomer. The cofactor is Mg(2+).

The enzyme catalyses L-rhamnulose + ATP = L-rhamnulose 1-phosphate + ADP + H(+). It functions in the pathway carbohydrate degradation; L-rhamnose degradation; glycerone phosphate from L-rhamnose: step 2/3. Its function is as follows. Involved in the catabolism of L-rhamnose (6-deoxy-L-mannose). Catalyzes the transfer of the gamma-phosphate group from ATP to the 1-hydroxyl group of L-rhamnulose to yield L-rhamnulose 1-phosphate. This Escherichia coli (strain 55989 / EAEC) protein is Rhamnulokinase.